The following is a 329-amino-acid chain: MSAEASGPAAAAAPSLEAPKPSGLEPGPAAYGLKPLTPNSKYVKLNVGGSLHYTTLRTLTGQDTMLKAMFSGRVEVLTDAGGWVLIDRSGRHFGTILNYLRDGSVPLPESTRELGELLGEARYYLVQGLIEDCQLALQQKRETLSPLCLIPMVTSPREEQQLLASTSKPVVKLLHNRSNNKYSYTSTSDDNLLKNIELFDKLALRFHGRLLFLKDVLGDEICCWSFYGQGRKIAEVCCTSIVYATEKKQTKVEFPEARIFEETLNILIYETPRGPDPALLEATGGAAGAGGAGRGEDEENREHRVRRIHVRRHITHDERPHGQQIVFKD.

Positions 1–22 (MSAEASGPAAAAAPSLEAPKPS) are enriched in low complexity. The segment at 1–31 (MSAEASGPAAAAAPSLEAPKPSGLEPGPAAY) is disordered. Positions 41–109 (KYVKLNVGGS…LRDGSVPLPE (69 aa)) constitute a BTB domain. The interval 282–303 (ATGGAAGAGGAGRGEDEENREH) is disordered.

It belongs to the BACURD family. In terms of assembly, homotetramer; forms a two-fold symmetric tetramer in solution. Interacts with CUL3; interaction is direct and forms a 5:5 heterodecamer. Component of the BCR(KCTD13) E3 ubiquitin ligase complex, at least composed of CUL3, KCTD13/BACURD1 and RBX1. Interacts with RHOA; with a preference for RhoA-GDP. Interacts with POLD2 and PCNA. Interacts with SPRTN. Expressed in a wide variety of tissues.

It is found in the nucleus. It functions in the pathway protein modification; protein ubiquitination. Substrate-specific adapter of a BCR (BTB-CUL3-RBX1) E3 ubiquitin-protein ligase complex required for synaptic transmission. The BCR(KCTD13) E3 ubiquitin ligase complex mediates the ubiquitination of RHOA, leading to its degradation by the proteasome Degradation of RHOA regulates the actin cytoskeleton and promotes synaptic transmission. In Homo sapiens (Human), this protein is BTB/POZ domain-containing adapter for CUL3-mediated RhoA degradation protein 1 (KCTD13).